Consider the following 360-residue polypeptide: Serine/threonine-protein kinase SRK2H (360 aa).

The Protein kinase domain maps to 4-260; sequence YEVVKDLGAG…LKEIKKHPWY (257 aa). Residues 10-18 and lysine 33 each bind ATP; that span reads LGAGNFGVA. The active-site Proton acceptor is aspartate 123. The disordered stretch occupies residues 298-360; that stretch reads EARNPAPSSN…AHSCQEPPKA (63 aa). The span at 313–343 shows a compositional bias: acidic residues; that stretch reads DDDEEDVEDEVEEEEEEEEEEEEEEEEEEDE. Positions 344-360 are enriched in basic and acidic residues; the sequence is YEKHVKEAHSCQEPPKA.

Belongs to the protein kinase superfamily. Ser/Thr protein kinase family. As to expression, expressed in seedlings.

The enzyme catalyses L-seryl-[protein] + ATP = O-phospho-L-seryl-[protein] + ADP + H(+). The catalysed reaction is L-threonyl-[protein] + ATP = O-phospho-L-threonyl-[protein] + ADP + H(+). This chain is Serine/threonine-protein kinase SRK2H (SRK2H), found in Arabidopsis thaliana (Mouse-ear cress).